Consider the following 99-residue polypeptide: Nucleoid-associated protein Cj1642 (99 aa).

This sequence belongs to the YbaB/EbfC family. In terms of assembly, homodimer.

It is found in the cytoplasm. Its subcellular location is the nucleoid. In terms of biological role, binds to DNA and alters its conformation. May be involved in regulation of gene expression, nucleoid organization and DNA protection. The polypeptide is Nucleoid-associated protein Cj1642 (Campylobacter jejuni subsp. jejuni serotype O:2 (strain ATCC 700819 / NCTC 11168)).